The following is a 302-amino-acid chain: MTQAATLSPTPFGRVVTAMVTPFDASGAVDLSVAANLARHLVEQGSDGLLVCGTTGESPTLSWDEQLQLLQAVRDAVGSDAKVLAGTGSNSTAEAVEATKEAAAAGADGALVVVPYYNKPPQEGLEAHFRAIAEAAPELPLMLYNIPGRTGCSIAPATVARLMDCPNVVSFKAASGTTEEVTALRLACGPQLAIYSGDDGLTLPMLAVGAVGVVSVGSHVAGPEIRAMIEAYLNGDGASALALHDALIPLFKALFATTNPIPVKAALELNGWSVGAPRPPLCSLSDDMKRSLSNAMAALRQT.

T55 is a binding site for pyruvate. The Proton donor/acceptor role is filled by Y144. Catalysis depends on K172, which acts as the Schiff-base intermediate with substrate. V214 provides a ligand contact to pyruvate.

This sequence belongs to the DapA family. In terms of assembly, homotetramer; dimer of dimers.

The protein resides in the cytoplasm. The catalysed reaction is L-aspartate 4-semialdehyde + pyruvate = (2S,4S)-4-hydroxy-2,3,4,5-tetrahydrodipicolinate + H2O + H(+). The protein operates within amino-acid biosynthesis; L-lysine biosynthesis via DAP pathway; (S)-tetrahydrodipicolinate from L-aspartate: step 3/4. Functionally, catalyzes the condensation of (S)-aspartate-beta-semialdehyde [(S)-ASA] and pyruvate to 4-hydroxy-tetrahydrodipicolinate (HTPA). The chain is 4-hydroxy-tetrahydrodipicolinate synthase from Synechococcus sp. (strain CC9605).